Consider the following 501-residue polypeptide: Phosphatase and actin regulator 1 (501 aa).

Residues 1–18 form an RPEL 1 repeat; sequence MRQSREELIKRGVLKEIF. 2 disordered regions span residues 21–46 and 295–329; these read DGELSIPNEEGALENGQPLGSGQVLS and DNKENVPHEADYEDSSCLYPRQEEEEEEDEDEDNS. Residues 36 to 46 show a composition bias toward low complexity; that stretch reads GQPLGSGQVLS. A compositionally biased stretch (basic and acidic residues) spans 295-304; it reads DNKENVPHEA. The segment covering 317 to 328 has biased composition (acidic residues); it reads EEEEEEDEDEDN. RPEL repeat units follow at residues 343–368, 381–406, and 419–444; these read DSLAIKLSNRPSKRELEEKNILPMQT, TKLTRRLSQRPTAEELEQRNILKPRN, and RRLTRKLSQRPTVEELRERKILIRFS. Residues 382-415 form a disordered region; sequence KLTRRLSQRPTAEELEQRNILKPRNEQEEQEEKR. Residues 392 to 415 are compositionally biased toward basic and acidic residues; the sequence is TAEELEQRNILKPRNEQEEQEEKR.

Belongs to the phosphatase and actin regulator family. In terms of assembly, interacts (via RPEL repeats) with ACTA1. As to expression, expressed in the gizzard, and in neurons from central and peripheral nervous systems.

The protein localises to the cytoplasm. It localises to the synapse. Its subcellular location is the nucleus. Its function is as follows. Binds actin monomers (G actin) and plays a role in the reorganization of the actin cytoskeleton and in formation of actin stress fibers. In Gallus gallus (Chicken), this protein is Phosphatase and actin regulator 1 (PHACTR1).